The chain runs to 399 residues: Elongation factor Tu (399 aa).

One can recognise a tr-type G domain in the interval 10 to 209 (NPHVNIGTIG…EVDSYIPTPE (200 aa)). Residues 19–26 (GHVYHGKT) are G1. Position 19–26 (19–26 (GHVYHGKT)) interacts with GTP. Residue Thr-26 coordinates Mg(2+). Residues 60–64 (GITIA) are G2. The G3 stretch occupies residues 81 to 84 (DCPG). GTP contacts are provided by residues 81–85 (DCPGH) and 136–139 (NKQD). The interval 136–139 (NKQD) is G4. The segment at 174–176 (SAL) is G5.

Belongs to the TRAFAC class translation factor GTPase superfamily. Classic translation factor GTPase family. EF-Tu/EF-1A subfamily. Monomer.

It localises to the cytoplasm. The catalysed reaction is GTP + H2O = GDP + phosphate + H(+). Functionally, GTP hydrolase that promotes the GTP-dependent binding of aminoacyl-tRNA to the A-site of ribosomes during protein biosynthesis. This chain is Elongation factor Tu, found in Helicobacter pylori (strain J99 / ATCC 700824) (Campylobacter pylori J99).